The following is a 154-amino-acid chain: Deoxyuridine 5'-triphosphate nucleotidohydrolase (154 aa).

Substrate-binding positions include 64–66, asparagine 77, 81–83, and lysine 91; these read RSG and TID.

Belongs to the dUTPase family. In terms of assembly, homotrimer. The cofactor is Mg(2+).

It carries out the reaction dUTP + H2O = dUMP + diphosphate + H(+). Its pathway is pyrimidine metabolism; dUMP biosynthesis; dUMP from dCTP (dUTP route): step 2/2. Functionally, this enzyme is involved in nucleotide metabolism: it produces dUMP, the immediate precursor of thymidine nucleotides and it decreases the intracellular concentration of dUTP so that uracil cannot be incorporated into DNA. The sequence is that of Deoxyuridine 5'-triphosphate nucleotidohydrolase from Mycobacterium bovis (strain BCG / Pasteur 1173P2).